The chain runs to 525 residues: AarF domain-containing protein kinase 1 (525 aa).

Positions 148-477 (SFDDTPLGAA…HKKRDAGSFF (330 aa)) constitute a Protein kinase domain. ATP-binding positions include 154-162 (LGAASLAQV) and K176. D308 functions as the Proton acceptor in the catalytic mechanism.

Belongs to the protein kinase superfamily. ADCK protein kinase family.

Its subcellular location is the mitochondrion. Its function is as follows. Appears to be essential for maintaining mitochondrial cristae formation and mitochondrial function by acting via YME1L1 in a kinase-independent manner to regulate essential mitochondrial structural proteins OPA1 and IMMT. The action of this enzyme is not yet clear. It is not known if it has protein kinase activity and what type of substrate it would phosphorylate (Ser, Thr or Tyr). The sequence is that of AarF domain-containing protein kinase 1 (Adck1) from Mus musculus (Mouse).